The chain runs to 565 residues: Proline--tRNA ligase (565 aa).

It belongs to the class-II aminoacyl-tRNA synthetase family. ProS type 1 subfamily. As to quaternary structure, homodimer.

The protein resides in the cytoplasm. The catalysed reaction is tRNA(Pro) + L-proline + ATP = L-prolyl-tRNA(Pro) + AMP + diphosphate. Its function is as follows. Catalyzes the attachment of proline to tRNA(Pro) in a two-step reaction: proline is first activated by ATP to form Pro-AMP and then transferred to the acceptor end of tRNA(Pro). As ProRS can inadvertently accommodate and process non-cognate amino acids such as alanine and cysteine, to avoid such errors it has two additional distinct editing activities against alanine. One activity is designated as 'pretransfer' editing and involves the tRNA(Pro)-independent hydrolysis of activated Ala-AMP. The other activity is designated 'posttransfer' editing and involves deacylation of mischarged Ala-tRNA(Pro). The misacylated Cys-tRNA(Pro) is not edited by ProRS. This Bacillus pumilus (strain SAFR-032) protein is Proline--tRNA ligase.